A 269-amino-acid polypeptide reads, in one-letter code: Pertussis toxin subunit 1 homolog (269 aa).

Residues 1–34 (MRCTRAIRQTARTGWLTWLAILAVTAPMTSPAWA) form the signal peptide.

This sequence belongs to the bacterial exotoxin subunit A family.

This Bordetella parapertussis (strain 12822 / ATCC BAA-587 / NCTC 13253) protein is Pertussis toxin subunit 1 homolog (ptxA).